We begin with the raw amino-acid sequence, 1300 residues long: Nephrocystin-3 (1300 aa).

Positions 82–183 form a coiled coil; that stretch reads KNNEVASMQK…LQRLQAQGIQ (102 aa). 9 TPR repeats span residues 443-476, 916-949, 958-991, 1000-1033, 1066-1099, 1108-1141, 1150-1183, 1192-1225, and 1234-1267; these read TMED…ICEL, ADLY…RETA, AQSL…SENA, AREL…RQKS, ARTL…RERV, AQSI…RRRA, AYTV…RQKS, ATAL…YEDS, and GETL…KETE. Residues 1268–1288 are disordered; that stretch reads TSVLGAKAPSGHSSSGGDTYS. Over residues 1278 to 1288 the composition is skewed to polar residues; it reads GHSSSGGDTYS.

The protein resides in the cell projection. Its subcellular location is the cilium. Its function is as follows. Required for normal ciliary development and function. Inhibits disheveled-1-induced canonical Wnt-signaling activity and may also play a role in the control of non-canonical Wnt signaling that regulates planar cell polarity. Probably acts as a molecular switch between different Wnt signaling pathways. Required for proper convergent extension cell movements. The chain is Nephrocystin-3 (nphp3) from Xenopus laevis (African clawed frog).